The chain runs to 805 residues: Phenylalanine--tRNA ligase beta subunit (805 aa).

The tRNA-binding domain occupies 39–154 (SEGLKKVVVG…DDATPGDPVF (116 aa)). One can recognise a B5 domain in the interval 410–485 (VQPTTVTIDL…RLYGYDNLPA (76 aa)). The Mg(2+) site is built by Asp463, Asp469, Glu472, and Glu473. In terms of domain architecture, FDX-ACB spans 712 to 805 (SKFPSITRDV…LTDELGAEIR (94 aa)).

This sequence belongs to the phenylalanyl-tRNA synthetase beta subunit family. Type 1 subfamily. In terms of assembly, tetramer of two alpha and two beta subunits. Mg(2+) serves as cofactor.

It is found in the cytoplasm. It catalyses the reaction tRNA(Phe) + L-phenylalanine + ATP = L-phenylalanyl-tRNA(Phe) + AMP + diphosphate + H(+). The protein is Phenylalanine--tRNA ligase beta subunit of Lactiplantibacillus plantarum (strain ATCC BAA-793 / NCIMB 8826 / WCFS1) (Lactobacillus plantarum).